A 166-amino-acid polypeptide reads, in one-letter code: Cofilin-1 (166 aa).

Ala2 carries the post-translational modification N-acetylalanine. Phosphoserine; by NRK is present on Ser3. In terms of domain architecture, ADF-H spans 4–153 (GVAVSDGVIK…KDRCTLAEKL (150 aa)). Phosphoserine is present on Ser8. Lys13 is subject to N6-acetyllysine. At Thr25 the chain carries Phosphothreonine. Positions 30-34 (KKRKK) match the Nuclear localization signal motif. Ser41 is modified (phosphoserine). Position 63 is a phosphothreonine (Thr63). A Phosphotyrosine modification is found at Tyr68. The residue at position 73 (Lys73) is an N6-acetyllysine. Tyr82 carries the phosphotyrosine modification. A Phosphoserine modification is found at Ser108. Lys132 is covalently cross-linked (Glycyl lysine isopeptide (Lys-Gly) (interchain with G-Cter in SUMO2)). Tyr140 is modified (phosphotyrosine). At Lys144 the chain carries N6-acetyllysine. Ser156 is modified (phosphoserine).

This sequence belongs to the actin-binding proteins ADF family. In terms of assembly, can bind G- and F-actin in a 1:1 ratio of cofilin to actin. It is a major component of intranuclear and cytoplasmic actin rods. Interacts with the subcortical maternal complex (SCMC) via interaction with TLE6 isoform 1 and NLRP5. Interacts with C9orf72. As to quaternary structure, (Microbial infection) Interacts with human respiratory syncytial virus (HRSV) matrix protein; this interaction probably facilitates viral replication. In terms of processing, inactivated by phosphorylation on Ser-3. Phosphorylated on Ser-3 in resting cells. Dephosphorylated by PDXP/chronophin; this restores its activity in promoting actin filament depolymerization. The phosphorylation of Ser-24 may prevent recognition of the nuclear localization signal. Phosphorylated via a ARRB1-RAC1-LIMK1-PAK1 cascade upon active ligand stimulation of atypical chemokine receptor ACKR2. Widely distributed in various tissues.

The protein resides in the nucleus matrix. Its subcellular location is the cytoplasm. The protein localises to the cytoskeleton. It is found in the cell projection. It localises to the ruffle membrane. The protein resides in the lamellipodium membrane. Its subcellular location is the lamellipodium. The protein localises to the growth cone. It is found in the axon. Functionally, binds to F-actin and exhibits pH-sensitive F-actin depolymerizing activity. In conjunction with the subcortical maternal complex (SCMC), plays an essential role for zygotes to progress beyond the first embryonic cell divisions via regulation of actin dynamics. Required for the centralization of the mitotic spindle and symmetric division of zygotes. Plays a role in the regulation of cell morphology and cytoskeletal organization in epithelial cells. Required for the up-regulation of atypical chemokine receptor ACKR2 from endosomal compartment to cell membrane, increasing its efficiency in chemokine uptake and degradation. Required for neural tube morphogenesis and neural crest cell migration. This chain is Cofilin-1 (CFL1), found in Homo sapiens (Human).